The following is a 108-amino-acid chain: Pyrimidine/purine nucleoside phosphorylase (108 aa).

Belongs to the nucleoside phosphorylase PpnP family.

The catalysed reaction is a purine D-ribonucleoside + phosphate = a purine nucleobase + alpha-D-ribose 1-phosphate. The enzyme catalyses adenosine + phosphate = alpha-D-ribose 1-phosphate + adenine. It catalyses the reaction cytidine + phosphate = cytosine + alpha-D-ribose 1-phosphate. It carries out the reaction guanosine + phosphate = alpha-D-ribose 1-phosphate + guanine. The catalysed reaction is inosine + phosphate = alpha-D-ribose 1-phosphate + hypoxanthine. The enzyme catalyses thymidine + phosphate = 2-deoxy-alpha-D-ribose 1-phosphate + thymine. It catalyses the reaction uridine + phosphate = alpha-D-ribose 1-phosphate + uracil. It carries out the reaction xanthosine + phosphate = alpha-D-ribose 1-phosphate + xanthine. Functionally, catalyzes the phosphorolysis of diverse nucleosides, yielding D-ribose 1-phosphate and the respective free bases. Can use uridine, adenosine, guanosine, cytidine, thymidine, inosine and xanthosine as substrates. Also catalyzes the reverse reactions. In Acinetobacter baumannii (strain AB307-0294), this protein is Pyrimidine/purine nucleoside phosphorylase.